The chain runs to 150 residues: Leukotriene C4 synthase (150 aa).

Over 1–6 (MKEETA) the chain is Cytoplasmic. The chain crosses the membrane as a helical span at residues 7–27 (LLATVTLLGVLLQAYFSLQVI). The Lumenal segment spans residues 28 to 48 (SARRTFHVSPPLTSGPPEFER). Residue Arg-30 participates in glutathione binding. The active-site Proton donor is Arg-31. A Phosphoserine modification is found at Ser-36. A helical transmembrane segment spans residues 49–69 (VFRAQVNCSEYFPLFLATLWV). Residues 51–55 (RAQVN) and 58–59 (EY) each bind glutathione. Residues 70-73 (AGIF) lie on the Cytoplasmic side of the membrane. The chain crosses the membrane as a helical span at residues 74–94 (FHEGAAALCGLFYLFARLRYF). 93–97 (YFQGY) provides a ligand contact to glutathione. The Lumenal portion of the chain corresponds to 95–104 (QGYARSAQHR). Arg-104 (proton acceptor) is an active-site residue. A helical membrane pass occupies residues 105–124 (LDPLYASARALWLLVAMAAL). Over 125 to 150 (GLLVHFLPGTLRAALFRWLQVLLPMA) the chain is Cytoplasmic.

Belongs to the MAPEG family. As to quaternary structure, homotrimer. Interacts with ALOX5AP and ALOX5. Phosphorylation at Ser-36 by RPS6KB1 inhibits the leukotriene-C4 synthase activity.

Its subcellular location is the nucleus outer membrane. It localises to the endoplasmic reticulum membrane. It is found in the nucleus membrane. It carries out the reaction leukotriene C4 = leukotriene A4 + glutathione. The enzyme catalyses (13S,14S)-epoxy-(4Z,7Z,9E,11E,16Z,19Z)-docosahexaenoate + glutathione = (13R)-S-glutathionyl-(14S)-hydroxy-(4Z,7Z,9E,11E,16Z,19Z)-docosahexaenoate. The protein operates within lipid metabolism; leukotriene C4 biosynthesis. Its activity is regulated as follows. Inhibited by MK886. Catalyzes the conjugation of leukotriene A4 with reduced glutathione (GSH) to form leukotriene C4 with high specificity. Can also catalyze the transfer of a glutathionyl group from glutathione (GSH) to 13(S),14(S)-epoxy-docosahexaenoic acid to form maresin conjugate in tissue regeneration 1 (MCTR1), a bioactive lipid mediator that possess potent anti-inflammatory and proresolving actions. The chain is Leukotriene C4 synthase (Ltc4s) from Rattus norvegicus (Rat).